Here is a 403-residue protein sequence, read N- to C-terminus: Argininosuccinate synthase (403 aa).

ATP-binding positions include 13–21 and Ala-40; that span reads AYSGGLDTS. Positions 92 and 97 each coordinate L-citrulline. Residue Gly-122 participates in ATP binding. 3 residues coordinate L-aspartate: Thr-124, Asn-128, and Asp-129. L-citrulline is bound at residue Asn-128. L-citrulline contacts are provided by Arg-132, Ser-181, Ser-190, Glu-266, and Tyr-278.

Belongs to the argininosuccinate synthase family. Type 1 subfamily. Homotetramer.

The protein resides in the cytoplasm. It carries out the reaction L-citrulline + L-aspartate + ATP = 2-(N(omega)-L-arginino)succinate + AMP + diphosphate + H(+). It functions in the pathway amino-acid biosynthesis; L-arginine biosynthesis; L-arginine from L-ornithine and carbamoyl phosphate: step 2/3. This Aliivibrio fischeri (strain MJ11) (Vibrio fischeri) protein is Argininosuccinate synthase.